A 171-amino-acid chain; its full sequence is Secreted thaumatin-like protein calA (171 aa).

The N-terminal stretch at 1 to 18 (MLFNKIISLAATLATASA) is a signal peptide. N-linked (GlcNAc...) asparagine glycosylation is found at N37 and N141. 2 disulfides stabilise this stretch: C130–C157 and C135–C142.

The protein belongs to the thaumatin family.

Its subcellular location is the secreted. The protein resides in the extracellular space. It localises to the extracellular matrix. The protein localises to the cell wall. Its function is as follows. Secreted thaumatin-like protein that, with cetA, plays an essential role in early conidial germination with a possible role in cell wall remodeling. This Emericella nidulans (strain FGSC A4 / ATCC 38163 / CBS 112.46 / NRRL 194 / M139) (Aspergillus nidulans) protein is Secreted thaumatin-like protein calA.